The chain runs to 331 residues: Centriolar satellite-associated tubulin polyglutamylase complex regulator 1 (331 aa).

The segment at 1 to 111 (MLSPERLALP…HCLLQLLCPD (111 aa)) is required for interaction with PCM1. Residues 1 to 225 (MLSPERLALP…SCPPPALVKE (225 aa)) form a required for interaction with TPGS1, LRRC49, and TTLL1 region. The segment at 112 to 331 (FPLELTQKAA…STEETDESET (220 aa)) is required for interaction with TPGS2. The disordered stretch occupies residues 292 to 331 (SCLPSRTPPRVGSPWKPLHRSRKLDAESDGSTEETDESET). Acidic residues predominate over residues 318-331 (ESDGSTEETDESET). Ser319 is subject to Phosphoserine.

The protein belongs to the CSTPP1 family. As to quaternary structure, interacts with PCM1. Interacts with TTLL1, TPGS1, TPGS2 and LRRC49; the interactions link CSTPP1 to the complex TPGC. Binds to alpha-tubulin.

It localises to the cytoplasm. It is found in the cytoskeleton. The protein resides in the microtubule organizing center. The protein localises to the centrosome. Its subcellular location is the centriolar satellite. Its function is as follows. Regulator of the tubulin polyglutamylase complex (TPGC) that controls cytoskeletal organization, nuclear shape, and cilium disassembly by balancing microtubule and actin assembly. Regulates the assembly and stability of the TPGC and thereby modulates polyglutamylation of the microtubule, which antagonizes MAP4 binding. The polypeptide is Centriolar satellite-associated tubulin polyglutamylase complex regulator 1 (Mus musculus (Mouse)).